The primary structure comprises 499 residues: Endoglucanase 3 (499 aa).

The first 19 residues, 1 to 19 (MALLRCLFLLAVLLPHRNA), serve as a signal peptide directing secretion. Asp88 serves as the catalytic Nucleophile. Residues His416, Asp467, and Glu476 contribute to the active site.

This sequence belongs to the glycosyl hydrolase 9 (cellulase E) family. Expressed in flowers.

It localises to the secreted. The catalysed reaction is Endohydrolysis of (1-&gt;4)-beta-D-glucosidic linkages in cellulose, lichenin and cereal beta-D-glucans.. In Oryza sativa subsp. japonica (Rice), this protein is Endoglucanase 3 (GLU8).